The following is a 432-amino-acid chain: Probable imidazolonepropionase (432 aa).

4-imidazolone-5-propanoate contacts are provided by Tyr159 and His192. Residue Tyr159 coordinates N-formimidoyl-L-glutamate. His260 contributes to the Fe(3+) binding site. His260 lines the Zn(2+) pocket. Glu263 lines the 4-imidazolone-5-propanoate pocket. Residue Asp334 coordinates Fe(3+). Asp334 is a Zn(2+) binding site. N-formimidoyl-L-glutamate is bound at residue Asn336.

The protein belongs to the metallo-dependent hydrolases superfamily. HutI family. Requires Zn(2+) as cofactor. It depends on Fe(3+) as a cofactor.

The enzyme catalyses 4-imidazolone-5-propanoate + H2O = N-formimidoyl-L-glutamate. It participates in amino-acid degradation; L-histidine degradation into L-glutamate; N-formimidoyl-L-glutamate from L-histidine: step 3/3. The sequence is that of Probable imidazolonepropionase (amdhd1) from Xenopus tropicalis (Western clawed frog).